A 157-amino-acid chain; its full sequence is Ribosomal RNA large subunit methyltransferase H (157 aa).

Residues Leu73, Gly104, and Leu121–Leu126 contribute to the S-adenosyl-L-methionine site.

It belongs to the RNA methyltransferase RlmH family. Homodimer.

It is found in the cytoplasm. The catalysed reaction is pseudouridine(1915) in 23S rRNA + S-adenosyl-L-methionine = N(3)-methylpseudouridine(1915) in 23S rRNA + S-adenosyl-L-homocysteine + H(+). Its function is as follows. Specifically methylates the pseudouridine at position 1915 (m3Psi1915) in 23S rRNA. The sequence is that of Ribosomal RNA large subunit methyltransferase H from Acidithiobacillus ferrooxidans (strain ATCC 23270 / DSM 14882 / CIP 104768 / NCIMB 8455) (Ferrobacillus ferrooxidans (strain ATCC 23270)).